Consider the following 109-residue polypeptide: Large ribosomal subunit protein uL24 (109 aa).

This sequence belongs to the universal ribosomal protein uL24 family. In terms of assembly, part of the 50S ribosomal subunit.

Functionally, one of two assembly initiator proteins, it binds directly to the 5'-end of the 23S rRNA, where it nucleates assembly of the 50S subunit. Its function is as follows. One of the proteins that surrounds the polypeptide exit tunnel on the outside of the subunit. The chain is Large ribosomal subunit protein uL24 from Syntrophobacter fumaroxidans (strain DSM 10017 / MPOB).